Consider the following 181-residue polypeptide: D-lyxose/D-mannose isomerase (181 aa).

Residues histidine 75, histidine 77, glutamate 88, and histidine 143 each coordinate Mn(2+).

It belongs to the D-lyxose ketol-isomerase family. As to quaternary structure, homodimer. It depends on Mn(2+) as a cofactor.

It carries out the reaction D-lyxose = D-xylulose. The enzyme catalyses D-mannose = D-fructose. Functionally, sugar isomerase that catalyzes the reversible isomerization of D-lyxose to D-xylulose, and D-mannose to D-fructose. Shows optimum activity using D-lyxose as substrate, but can also effectively catalyze the isomerization between D-fructose and D-mannose. The polypeptide is D-lyxose/D-mannose isomerase (Thermosediminibacter oceani (strain ATCC BAA-1034 / DSM 16646 / JW/IW-1228P)).